Consider the following 46-residue polypeptide: U-myrmeciitoxin(01)-Mg6a (46 aa).

Residues 1 to 20 (MNLKTFCFFLLGIFVTLTVT) form the signal peptide. A propeptide spanning residues 21–33 (VIPIANADAEADT) is cleaved from the precursor.

Post-translationally, contains 1 disulfide bond. As to expression, expressed by the venom gland.

The protein localises to the secreted. The chain is U-myrmeciitoxin(01)-Mg6a from Myrmecia gulosa (Red bulldog ant).